Here is a 130-residue protein sequence, read N- to C-terminus: Histone H2A (130 aa).

N6-acetyllysine is present on residues Lys-4 and Lys-7. Gln-105 carries the post-translational modification N5-methylglutamine. Residue Ser-127 is modified to Phosphoserine. The [ST]-Q motif motif lies at 127-128; the sequence is SQ.

Belongs to the histone H2A family. The nucleosome is a histone octamer containing two molecules each of H2A, H2B, H3 and H4 assembled in one H3-H4 heterotetramer and two H2A-H2B heterodimers. The octamer wraps approximately 147 bp of DNA. Post-translationally, phosphorylated to form H2AS128ph (gamma-H2A) in response to DNA double-strand breaks (DSBs) generated by exogenous genotoxic agents and by stalled replication forks. Phosphorylation is dependent on the DNA damage checkpoint kinases MEC1/ATR and TEL1/ATM, spreads on either side of a detected DSB site and may mark the surrounding chromatin for recruitment of proteins required for DNA damage signaling and repair. Gamma-H2A is removed from the DNA prior to the strand invasion-primer extension step of the repair process and subsequently dephosphorylated by PPH3, a component of the histone H2A phosphatase complex (HTP-C). Dephosphorylation is necessary for efficient recovery from the DNA damage checkpoint. In terms of processing, acetylated by ESA1 to form H2AK4ac and H2AK7ac.

It localises to the nucleus. Its subcellular location is the chromosome. Functionally, core component of nucleosome which plays a central role in DNA double strand break (DSB) repair. Nucleosomes wrap and compact DNA into chromatin, limiting DNA accessibility to the cellular machineries which require DNA as a template. Histones thereby play a central role in transcription regulation, DNA repair, DNA replication and chromosomal stability. DNA accessibility is regulated via a complex set of post-translational modifications of histones, also called histone code, and nucleosome remodeling. This Kluyveromyces lactis (strain ATCC 8585 / CBS 2359 / DSM 70799 / NBRC 1267 / NRRL Y-1140 / WM37) (Yeast) protein is Histone H2A (HTA1).